A 67-amino-acid polypeptide reads, in one-letter code: Ranatuerin-2Vb (67 aa).

Residues 1 to 22 form the signal peptide; that stretch reads MFTLKKSFLLLFFLGTITLSLC. A propeptide spanning residues 23–39 is cleaved from the precursor; that stretch reads EEERGADDDDGEEEVKR. A disulfide bond links Cys-62 and Cys-67.

Expressed by the skin glands.

The protein localises to the secreted. In terms of biological role, antimicrobial peptide. In Odorrana versabilis (Chinese bamboo leaf odorous frog), this protein is Ranatuerin-2Vb.